Reading from the N-terminus, the 596-residue chain is Beta-fructofuranosidase, insoluble isoenzyme 6 (596 aa).

Residues 1-25 (MALAGLPLSVFAIAVHFCLVFSSSS) form the signal peptide. Residues 49–52 (WQND), Gln-68, and Trp-76 contribute to the substrate site. Asp-52 is an active-site residue. The N-linked (GlcNAc...) asparagine glycan is linked to Asn-80. Substrate is bound by residues 113–114 (AS), 177–178 (RD), and Glu-232. Asn-335 carries an N-linked (GlcNAc...) asparagine glycan. A disulfide bond links Cys-436 and Cys-482. Asn-556 carries N-linked (GlcNAc...) asparagine glycosylation.

This sequence belongs to the glycosyl hydrolase 32 family. As to expression, expressed in roots. Weakly expressed in flowers.

It is found in the secreted. Its subcellular location is the extracellular space. The protein localises to the apoplast. The protein resides in the cell wall. It catalyses the reaction Hydrolysis of terminal non-reducing beta-D-fructofuranoside residues in beta-D-fructofuranosides.. This Oryza sativa subsp. japonica (Rice) protein is Beta-fructofuranosidase, insoluble isoenzyme 6 (CIN6).